An 84-amino-acid chain; its full sequence is Putative membrane protein insertion efficiency factor (84 aa).

The interval 60–84 is disordered; sequence WSQPGEDPVPDHFSLKRNDTRKQSH. Basic and acidic residues predominate over residues 68–84; sequence VPDHFSLKRNDTRKQSH.

The protein belongs to the UPF0161 family.

It localises to the cell membrane. Functionally, could be involved in insertion of integral membrane proteins into the membrane. This Streptococcus gordonii (strain Challis / ATCC 35105 / BCRC 15272 / CH1 / DL1 / V288) protein is Putative membrane protein insertion efficiency factor.